Reading from the N-terminus, the 294-residue chain is Eukaryotic translation initiation factor 3 subunit F (294 aa).

The region spanning 20–163 (VTVTAQALFQ…IDPSKNSGNC (144 aa)) is the MPN domain.

The protein belongs to the eIF-3 subunit F family. Component of the eukaryotic translation initiation factor 3 (eIF-3) complex.

The protein localises to the cytoplasm. Functionally, component of the eukaryotic translation initiation factor 3 (eIF-3) complex, which is involved in protein synthesis of a specialized repertoire of mRNAs and, together with other initiation factors, stimulates binding of mRNA and methionyl-tRNAi to the 40S ribosome. The eIF-3 complex specifically targets and initiates translation of a subset of mRNAs involved in cell proliferation. The protein is Eukaryotic translation initiation factor 3 subunit F of Yarrowia lipolytica (strain CLIB 122 / E 150) (Yeast).